The chain runs to 272 residues: MMVVCAAAAVRFLAVFTMMALCSLPLLGASATLNSVLINSNAIKNLPPPLGGAGGQPGSAVSVAPGVLYEGGNKYQTLDNYQPYPCAEDEECGSDEYCSSPSRGAAGVGGVQICLACRKRRKRCMRHAMCCPGNYCKNGICMPSDHSHFPRGEIEESIIENLGNDHNAAAGDGYPRRTTLTSKIYHTKGQEGSVCLRSSDCAAGLCCARHFWSKICKPVLKEGQVCTKHKRKGSHGLEIFQRCYCGEGLACRIQKDHHQASNSSRLHTCQRH.

The signal sequence occupies residues 1–31; that stretch reads MMVVCAAAAVRFLAVFTMMALCSLPLLGASA. Serine 62 carries an O-linked (GalNAc...) serine glycan. Disulfide bonds link cysteine 86–cysteine 98, cysteine 92–cysteine 114, cysteine 117–cysteine 131, cysteine 124–cysteine 136, cysteine 130–cysteine 141, cysteine 195–cysteine 207, cysteine 201–cysteine 216, cysteine 206–cysteine 243, cysteine 226–cysteine 251, and cysteine 245–cysteine 269. The interval 86 to 141 is DKK-type Cys-1; that stretch reads CAEDEECGSDEYCSSPSRGAAGVGGVQICLACRKRRKRCMRHAMCCPGNYCKNGIC. Residues 195-269 are DKK-type Cys-2; the sequence is CLRSSDCAAG…ASNSSRLHTC (75 aa). N-linked (GlcNAc...) asparagine glycosylation occurs at asparagine 262.

Belongs to the dickkopf family. Interacts (via the C-terminal Cys-rich domain) with LRP5 (via beta-propeller regions 3 and 4); the interaction, enhanced by MESD and or KREMEN, antagonizes Wnt-mediated signaling. Interacts with LRP6. Forms a ternary complex with LRP6 and KREM1. Interacts with KREM1.

It localises to the secreted. Functionally, antagonizes canonical Wnt signaling by inhibiting LRP5/6 interaction with Wnt and by forming a ternary complex with the transmembrane protein KREMEN that promotes internalization of LRP5/6. Inhibits the pro-apoptotic function of KREMEN1 in a Wnt-independent manner, and has anti-apoptotic activity. Plays a role in limb development; attenuates Wnt signaling in the developing limb to allow normal limb patterning. In Mus musculus (Mouse), this protein is Dickkopf-related protein 1 (Dkk1).